The sequence spans 100 residues: Small ribosomal subunit protein uS14c (100 aa).

It belongs to the universal ribosomal protein uS14 family. In terms of assembly, part of the 30S ribosomal subunit.

It is found in the plastid. The protein resides in the chloroplast. Functionally, binds 16S rRNA, required for the assembly of 30S particles. The chain is Small ribosomal subunit protein uS14c from Olimarabidopsis pumila (Dwarf rocket).